A 496-amino-acid chain; its full sequence is MNIPFVVETVLHDGLLKYKFKNSKIRSITTKPGKSKGAIFAYRSKKSMIGGRGVVLTSEEAIHENQDTFTHWTPNVYRYGTYADENRSYTKGHSENNLRQINTFFIDFDIHTEKETISASDILTTAIDLGFMPTLIIKSDKGYQAYFVLETPVYVTSKSEFKSVKAAKIISQNIREYFGKSLPVDLTCNHFGIARIPRTDNVEFFDPNYRYSFKEWQDWSFKQTDNKGFTRSSLTVLSGTEGKKQVDEPWFNLLLHETKFSGEKGLVGRNSVMFTLSLAYFSSGYSIETCEYNMFEFNNRLDQPLEEKEVIKIVRSAYSENYQGANREYITILCKAWVSSDLTSKDLFVRQGWFKFKKKRSERQRVHLSEWKEDLMAYISEKSDVYKPYLATTKKEIREVLGIPERTLDKLLKVLKANQEIFFKIKPGRNGGIQLASVKSLLLSIIKLKKEERESYIKALTASFNLERTFIQETLNKLAERPKTDPQLDLFSYDTG.

The DNA-binding element occupies 120 to 141; sequence SDILTTAIDLGFMPTLIIKSDK.

Functionally, essential for replication. This Streptococcus agalactiae protein is Protein RepR (repR).